A 101-amino-acid chain; its full sequence is MAKQSMKAREVKRVKLADKFFAKRAELKAIISDVNASDEDRWNAVLKLQTLPRDSSPSRQRNPCRQTGRPHGYVGKFGLSRIKLREAAMRGEVPGLKKASW.

The disordered stretch occupies residues 51-72 (LPRDSSPSRQRNPCRQTGRPHG). The span at 52 to 65 (PRDSSPSRQRNPCR) shows a compositional bias: polar residues.

Belongs to the universal ribosomal protein uS14 family. Part of the 30S ribosomal subunit. Contacts proteins S3 and S10.

Binds 16S rRNA, required for the assembly of 30S particles and may also be responsible for determining the conformation of the 16S rRNA at the A site. In Buchnera aphidicola subsp. Acyrthosiphon kondoi (Acyrthosiphon kondoi symbiotic bacterium), this protein is Small ribosomal subunit protein uS14.